Reading from the N-terminus, the 455-residue chain is Argininosuccinate lyase (455 aa).

Belongs to the lyase 1 family. Argininosuccinate lyase subfamily.

The protein resides in the cytoplasm. It catalyses the reaction 2-(N(omega)-L-arginino)succinate = fumarate + L-arginine. It functions in the pathway amino-acid biosynthesis; L-arginine biosynthesis; L-arginine from L-ornithine and carbamoyl phosphate: step 3/3. The sequence is that of Argininosuccinate lyase from Roseiflexus castenholzii (strain DSM 13941 / HLO8).